Here is a 486-residue protein sequence, read N- to C-terminus: Cysteine--tRNA ligase (486 aa).

Cys-29 lines the Zn(2+) pocket. The 'HIGH' region motif lies at 31 to 41 (VTVYDYCHLGH). Zn(2+) contacts are provided by Cys-217, His-242, and Glu-246. Positions 274-278 (KMSKS) match the 'KMSKS' region motif. Lys-277 is an ATP binding site.

It belongs to the class-I aminoacyl-tRNA synthetase family. Monomer. Requires Zn(2+) as cofactor.

The protein resides in the cytoplasm. It catalyses the reaction tRNA(Cys) + L-cysteine + ATP = L-cysteinyl-tRNA(Cys) + AMP + diphosphate. This chain is Cysteine--tRNA ligase, found in Thermosynechococcus vestitus (strain NIES-2133 / IAM M-273 / BP-1).